Here is a 435-residue protein sequence, read N- to C-terminus: Salicylate hydroxylase (435 aa).

FAD is bound at residue 12 to 41 (RVAIVGGGISGLALALSLCKHSHLNVQLFE).

FAD is required as a cofactor.

It carries out the reaction salicylate + NADH + O2 + 2 H(+) = catechol + CO2 + NAD(+) + H2O. It participates in aromatic compound metabolism; naphthalene degradation. The sequence is that of Salicylate hydroxylase (nahG) from Pseudomonas putida (Arthrobacter siderocapsulatus).